Here is a 22-residue protein sequence, read N- to C-terminus: 2.39 kDa venom peptide (22 aa).

Post-translationally, contains 2 disulfide bonds. Expressed by the venom gland.

It localises to the secreted. Its function is as follows. Not lethal to mice by intraperitoneal or intracerebroventricular injections in doses up to 100 micrograms. The chain is 2.39 kDa venom peptide from Heterometrus spinifer (Asia giant forest scorpion).